A 321-amino-acid polypeptide reads, in one-letter code: tRNA-5-methyluridine(54) 2-sulfurtransferase (321 aa).

Zn(2+) is bound by residues Cys-3, Cys-6, Cys-22, and His-25. Residues 53 to 55 (AVS), Asp-59, and Ile-79 each bind ATP. [4Fe-4S] cluster-binding residues include Cys-130 and Cys-133. Lys-137 is covalently cross-linked (Glycyl lysine isopeptide (Lys-Gly) (interchain with G-Cter in TtuB)). ATP-binding residues include Gly-156 and Asp-161. Cys-222 provides a ligand contact to [4Fe-4S] cluster. Residues Lys-226 and Lys-229 each participate in a glycyl lysine isopeptide (Lys-Gly) (interchain with G-Cter in TtuB) cross-link. Zn(2+) is bound by residues Cys-274, Cys-277, Cys-286, and Cys-289.

It belongs to the TtcA family. TtuA subfamily. In terms of assembly, homodimer. Is able to form a heterocomplex with TtuB. [4Fe-4S] cluster is required as a cofactor. The cofactor is Mg(2+). Post-translationally, conjugated to TtuB via covalent linkages involving Lys-137, Lys-226 and Lys-229.

The enzyme catalyses [TtuB sulfur-carrier protein]-C-terminal-Gly-aminoethanethioate + 5-methyluridine(54) in tRNA + ATP + H2O = [TtuB sulfur-carrier protein]-C-terminal Gly-Gly + 5-methyl-2-thiouridine(54) in tRNA + AMP + diphosphate + H(+). It participates in tRNA modification. Enzymatic activity may be regulated by TtuB conjugation. In terms of biological role, catalyzes the ATP-dependent 2-thiolation of 5-methyluridine residue at position 54 in the T loop of tRNAs, leading to 5-methyl-2-thiouridine (m(5)s(2)U or s(2)T). This modification allows thermal stabilization of tRNAs in thermophilic microorganisms, and is required for cell growth at high temperatures. TtuA transfers the S atom from the thiocarboxylated C-terminus of TtuB to tRNA. This Thermus thermophilus (strain ATCC BAA-163 / DSM 7039 / HB27) protein is tRNA-5-methyluridine(54) 2-sulfurtransferase.